The following is a 336-amino-acid chain: NADH-cytochrome b5 reductase 2 (336 aa).

A helical membrane pass occupies residues Gly-28 to Tyr-50. Residues Gln-84–Ser-189 enclose the FAD-binding FR-type domain. Lys-192–Leu-227 serves as a coordination point for FAD.

It belongs to the flavoprotein pyridine nucleotide cytochrome reductase family. FAD is required as a cofactor.

It localises to the mitochondrion outer membrane. The catalysed reaction is 2 Fe(III)-[cytochrome b5] + NADH = 2 Fe(II)-[cytochrome b5] + NAD(+) + H(+). In terms of biological role, may mediate the reduction of outer membrane cytochrome b5. This chain is NADH-cytochrome b5 reductase 2 (MCR1), found in Phaeosphaeria nodorum (strain SN15 / ATCC MYA-4574 / FGSC 10173) (Glume blotch fungus).